We begin with the raw amino-acid sequence, 264 residues long: ATP synthase subunit a (264 aa).

7 consecutive transmembrane segments (helical) span residues 29-49, 90-110, 111-131, 134-154, 177-197, 208-228, and 235-255; these read TWHIDSLLFSVGLGVLFLWIF, IAPLALTIFVWVFMMNFMDMI, PVDWLPSLALLAGVEYLKVVP, DVNITFSLAIGVFVLIIYYSI, IPVNLLLESVTLIAKPISLAL, LIFILIALMYSANWAMATLGV, and LIFHILVITLQAFIFMMLTIV.

Belongs to the ATPase A chain family. F-type ATPases have 2 components, CF(1) - the catalytic core - and CF(0) - the membrane proton channel. CF(1) has five subunits: alpha(3), beta(3), gamma(1), delta(1), epsilon(1). CF(0) has three main subunits: a(1), b(2) and c(9-12). The alpha and beta chains form an alternating ring which encloses part of the gamma chain. CF(1) is attached to CF(0) by a central stalk formed by the gamma and epsilon chains, while a peripheral stalk is formed by the delta and b chains.

The protein localises to the cell inner membrane. Functionally, key component of the proton channel; it plays a direct role in the translocation of protons across the membrane. This chain is ATP synthase subunit a, found in Shewanella denitrificans (strain OS217 / ATCC BAA-1090 / DSM 15013).